The chain runs to 157 residues: 6,7-dimethyl-8-ribityllumazine synthase (157 aa).

5-amino-6-(D-ribitylamino)uracil is bound by residues F23, 57 to 59, and 81 to 83; these read AFE and AVI. 86 to 87 provides a ligand contact to (2S)-2-hydroxy-3-oxobutyl phosphate; it reads ST. Residue H89 is the Proton donor of the active site. Residue F114 coordinates 5-amino-6-(D-ribitylamino)uracil. R128 contributes to the (2S)-2-hydroxy-3-oxobutyl phosphate binding site.

Belongs to the DMRL synthase family.

It carries out the reaction (2S)-2-hydroxy-3-oxobutyl phosphate + 5-amino-6-(D-ribitylamino)uracil = 6,7-dimethyl-8-(1-D-ribityl)lumazine + phosphate + 2 H2O + H(+). The protein operates within cofactor biosynthesis; riboflavin biosynthesis; riboflavin from 2-hydroxy-3-oxobutyl phosphate and 5-amino-6-(D-ribitylamino)uracil: step 1/2. Catalyzes the formation of 6,7-dimethyl-8-ribityllumazine by condensation of 5-amino-6-(D-ribitylamino)uracil with 3,4-dihydroxy-2-butanone 4-phosphate. This is the penultimate step in the biosynthesis of riboflavin. The sequence is that of 6,7-dimethyl-8-ribityllumazine synthase from Desulfosudis oleivorans (strain DSM 6200 / JCM 39069 / Hxd3) (Desulfococcus oleovorans).